Consider the following 440-residue polypeptide: Transposon Ty1-JR1 Gag polyprotein (440 aa).

Residues 1–16 (MESQQLSQHSHISHGS) are compositionally biased toward low complexity. Disordered stretches follow at residues 1 to 93 (MESQ…MMTQ), 126 to 173 (PQSQ…RPPP), and 352 to 440 (GSRN…PGTY). Composition is skewed to polar residues over residues 48-60 (TKAN…TPAS) and 127-152 (QSQF…GNTF). The span at 153–165 (TDSSSADSDMTST) shows a compositional bias: low complexity. Positions 299 to 401 (NNGIHINNKV…NSKSKTARAH (103 aa)) are RNA-binding. Residues 402–418 (NVSTSNNSPSTDNDSIS) show a composition bias toward low complexity. Position 416 is a phosphoserine (Ser416). The span at 419–428 (KSTTEPIQLN) shows a compositional bias: polar residues. Residues 429–440 (NKHDLHLRPGTY) show a composition bias toward basic and acidic residues.

As to quaternary structure, homotrimer.

It localises to the cytoplasm. Functionally, capsid protein (CA) is the structural component of the virus-like particle (VLP), forming the shell that encapsulates the retrotransposons dimeric RNA genome. The particles are assembled from trimer-clustered units and there are holes in the capsid shells that allow for the diffusion of macromolecules. CA also has nucleocapsid-like chaperone activity, promoting primer tRNA(i)-Met annealing to the multipartite primer-binding site (PBS), dimerization of Ty1 RNA and initiation of reverse transcription. This Saccharomyces cerevisiae (strain ATCC 204508 / S288c) (Baker's yeast) protein is Transposon Ty1-JR1 Gag polyprotein (TY1A-JR1).